The chain runs to 496 residues: Pyrrole-2-carboxylic acid decarboxylase (496 aa).

Residue Trp-166 participates in K(+) binding. The prenylated FMN site is built by Val-168, Arg-170, Gln-187, and His-188. His-188 is a binding site for Mn(2+). 4 residues coordinate K(+): Ala-218, Ala-219, Met-221, and Glu-229. Glu-229 contacts prenylated FMN. Glu-229 is a Mn(2+) binding site. The active-site Proton donor is the Glu-278. Residue His-386 coordinates prenylated FMN.

It belongs to the UbiD family. UbiD-like/FDC subfamily. As to quaternary structure, homodimer. The cofactor is prenylated FMN. Mn(2+) serves as cofactor. It depends on K(+) as a cofactor.

It catalyses the reaction pyrrole-2-carboxylate + H(+) = 1H-pyrrole + CO2. It carries out the reaction pyrrole-2-carboxylate + H2O = 1H-pyrrole + hydrogencarbonate. With respect to regulation, imidazole acts as a reversible inhibitor via the formation of an imidazole-prenyl-FMN adduct. Activity is light sensitive. In terms of biological role, catalyzes the prenyl-FMN-dependent decarboxylation of pyrrole-2-carboxylate (P2C). Can also catalyze the carboxylation of pyrrole in the presence of elevated concentrations of CO(2) or bicarbonate. Can accept a modest range of heteroaromatic compounds such as 3-methylpyrrole-2-carboxylate, indole-3-carboxylate and furan-2-carboxylate, and shows very low activity with thiophene-2-carboxylate. Attenuates the virulence of P.aeruginosa in a Drosophila model when overexpressed. This Pseudomonas aeruginosa (strain ATCC 15692 / DSM 22644 / CIP 104116 / JCM 14847 / LMG 12228 / 1C / PRS 101 / PAO1) protein is Pyrrole-2-carboxylic acid decarboxylase.